A 205-amino-acid chain; its full sequence is Holliday junction branch migration complex subunit RuvA (205 aa).

The domain I stretch occupies residues 1–64 (MIGKLKGLID…EDQIKLFGFR (64 aa)). Residues 65–143 (SDLEREWFRL…GFASVDPAVA (79 aa)) are domain II. The segment at 144–153 (HLSGAIEERS) is flexible linker. The tract at residues 153 to 205 (SAPRPVADAISALVNLGYGQPQAAAAIAAAARSAGDAAQTAQLIKLGLKELSK) is domain III.

The protein belongs to the RuvA family. As to quaternary structure, homotetramer. Forms an RuvA(8)-RuvB(12)-Holliday junction (HJ) complex. HJ DNA is sandwiched between 2 RuvA tetramers; dsDNA enters through RuvA and exits via RuvB. An RuvB hexamer assembles on each DNA strand where it exits the tetramer. Each RuvB hexamer is contacted by two RuvA subunits (via domain III) on 2 adjacent RuvB subunits; this complex drives branch migration. In the full resolvosome a probable DNA-RuvA(4)-RuvB(12)-RuvC(2) complex forms which resolves the HJ.

The protein resides in the cytoplasm. In terms of biological role, the RuvA-RuvB-RuvC complex processes Holliday junction (HJ) DNA during genetic recombination and DNA repair, while the RuvA-RuvB complex plays an important role in the rescue of blocked DNA replication forks via replication fork reversal (RFR). RuvA specifically binds to HJ cruciform DNA, conferring on it an open structure. The RuvB hexamer acts as an ATP-dependent pump, pulling dsDNA into and through the RuvAB complex. HJ branch migration allows RuvC to scan DNA until it finds its consensus sequence, where it cleaves and resolves the cruciform DNA. This is Holliday junction branch migration complex subunit RuvA from Rhodopseudomonas palustris (strain BisA53).